The sequence spans 367 residues: Mitogen-activated protein kinase 12 (367 aa).

The Protein kinase domain maps to 27 to 311 (YRDLQPVGSG…AGEALAHPYF (285 aa)). Residues 33–41 (VGSGAYGAV) and Lys-56 each bind ATP. Asp-153 functions as the Proton acceptor in the catalytic mechanism. At Thr-183 the chain carries Phosphothreonine; by MAP2K3 and MAP2K6. The short motif at 183–185 (TGY) is the TXY element. Tyr-185 bears the Phosphotyrosine mark.

The protein belongs to the protein kinase superfamily. CMGC Ser/Thr protein kinase family. MAP kinase subfamily. As to quaternary structure, monomer. Interacts with the PDZ domain of the syntrophin SNTA1. Interacts with SH3BP5. Interacts with LIN7C, SCRIB and SYNJ2BP. Interacts with PTPN4; this interaction induces the activation of PTPN4 phosphatase activity. Mg(2+) is required as a cofactor. Post-translationally, dually phosphorylated on Thr-183 and Tyr-185 by MAP2K3/MKK3 and MAP2K6/MKK6, which activates the enzyme. In terms of processing, ubiquitinated. Ubiquitination leads to degradation by the proteasome pathway. Highly expressed in skeletal muscle and heart.

It localises to the cytoplasm. Its subcellular location is the nucleus. The protein resides in the mitochondrion. The enzyme catalyses L-seryl-[protein] + ATP = O-phospho-L-seryl-[protein] + ADP + H(+). The catalysed reaction is L-threonyl-[protein] + ATP = O-phospho-L-threonyl-[protein] + ADP + H(+). Activated by phosphorylation on threonine and tyrosine. MAP2K3/MKK3 and MAP2K6/MKK6 are both essential for the activation of MAPK12 induced by environmental stress, whereas MAP2K6/MKK6 is the major MAPK12 activator in response to TNF-alpha. Its function is as follows. Serine/threonine kinase which acts as an essential component of the MAP kinase signal transduction pathway. MAPK12 is one of the four p38 MAPKs which play an important role in the cascades of cellular responses evoked by extracellular stimuli such as pro-inflammatory cytokines or physical stress leading to direct activation of transcription factors such as ELK1 and ATF2. Accordingly, p38 MAPKs phosphorylate a broad range of proteins and it has been estimated that they may have approximately 200 to 300 substrates each. Some of the targets are downstream kinases such as MAPKAPK2, which are activated through phosphorylation and further phosphorylate additional targets. Plays a role in myoblast differentiation and also in the down-regulation of cyclin D1 in response to hypoxia in adrenal cells suggesting MAPK12 may inhibit cell proliferation while promoting differentiation. Phosphorylates DLG1. Following osmotic shock, MAPK12 in the cell nucleus increases its association with nuclear DLG1, thereby causing dissociation of DLG1-SFPQ complexes. This function is independent of its catalytic activity and could affect mRNA processing and/or gene transcription to aid cell adaptation to osmolarity changes in the environment. Regulates UV-induced checkpoint signaling and repair of UV-induced DNA damage and G2 arrest after gamma-radiation exposure. MAPK12 is involved in the regulation of SLC2A1 expression and basal glucose uptake in L6 myotubes; and negatively regulates SLC2A4 expression and contraction-mediated glucose uptake in adult skeletal muscle. C-Jun (JUN) phosphorylation is stimulated by MAPK14 and inhibited by MAPK12, leading to a distinct AP-1 regulation. MAPK12 is required for the normal kinetochore localization of PLK1, prevents chromosomal instability and supports mitotic cell viability. MAPK12-signaling is also positively regulating the expansion of transient amplifying myogenic precursor cells during muscle growth and regeneration. The protein is Mitogen-activated protein kinase 12 (MAPK12) of Homo sapiens (Human).